The sequence spans 433 residues: IPAAPVAAQARKLLRDLAFRPPLLAARSQVVQLTPRRWLNLQEYQSKKLMSDNGVKVQRFFVADTANEALEAAKRLNAKEIVLKAQILAGGRGKGVFSSGLKGGVHLTKDPEVVGQLAKQMIGYNLATKQTPKEGVKVNKVMVAEALDISRETYLAILMDRSCNGPVLVGSPQGGVDIEEVAASNPELIFKEQIDIIEGIKDSQAQRMAENLGFLGPLQNQAADQIKKLYNLFLKIDATQVEVNPFGETPEGQVVCFDAKINFDDNAEFRQKDIFAMDDKSENEPIENEAAKYDLKYIGLDGNIACFVNGAGLAMATCDIIFLNGGKPANFLDLGGGVKESQVYQAFKLLTADPKVEAILVNIFGGIVNCAIIANGITKACRELELKVPLVVRLEGTNVHEAQNILTNSGLPITSAVDLEDAAKKAVASVTKK.

Residues 1–38 (IPAAPVAAQARKLLRDLAFRPPLLAARSQVVQLTPRRW) constitute a mitochondrion transit peptide. The ATP-grasp domain maps to 47 to 275 (KKLMSDNGVK…NAEFRQKDIF (229 aa)). A GTP-binding site is contributed by Gln-58. Position 74 is an N6-acetyllysine (Lys-74). Lys-79 is modified (N6-succinyllysine). 91-93 (GRG) is a GTP binding site. 2 positions are modified to N6-acetyllysine: Lys-133 and Lys-140. Leu-147 contributes to the GTP binding site. A Phosphoserine modification is found at Ser-162. Lys-201 and Lys-228 each carry N6-acetyllysine. 2 residues coordinate Mg(2+): Asn-244 and Asp-258. Residues Lys-272 and Lys-292 each carry the N6-acetyllysine modification. Position 309 (Asn-309) interacts with substrate. Lys-339 carries the post-translational modification N6-succinyllysine. Lys-348 is modified (N6-acetyllysine). 366–368 (GIV) is a binding site for substrate. 2 positions are modified to N6-acetyllysine: Lys-387 and Lys-424.

Belongs to the succinate/malate CoA ligase beta subunit family. GTP-specific subunit beta subfamily. Heterodimer of an alpha and a beta subunit. The beta subunit determines specificity for GTP. Requires Mg(2+) as cofactor.

It is found in the mitochondrion. The enzyme catalyses GTP + succinate + CoA = succinyl-CoA + GDP + phosphate. It functions in the pathway carbohydrate metabolism; tricarboxylic acid cycle; succinate from succinyl-CoA (ligase route): step 1/1. Functionally, GTP-specific succinyl-CoA synthetase functions in the citric acid cycle (TCA), coupling the hydrolysis of succinyl-CoA to the synthesis of GTP and thus represents the only step of substrate-level phosphorylation in the TCA. The beta subunit provides nucleotide specificity of the enzyme and binds the substrate succinate, while the binding sites for coenzyme A and phosphate are found in the alpha subunit. This Sus scrofa (Pig) protein is Succinate--CoA ligase [GDP-forming] subunit beta, mitochondrial.